Consider the following 164-residue polypeptide: Putative glutamine amidotransferase-like protein RP713 (164 aa).

In terms of domain architecture, Glutamine amidotransferase type-1 spans 39–164 (TIANPNSLFM…VITVKIIIYM (126 aa)).

The chain is Putative glutamine amidotransferase-like protein RP713 from Rickettsia prowazekii (strain Madrid E).